The primary structure comprises 678 residues: Chloride channel protein ClC-Kb (678 aa).

Residues 1–50 (MEELVGLREGSSGNPVALRELWSPCPRLRRGIRGGLEWLKQKLFRVGEDW) lie on the Cytoplasmic side of the membrane. Transmembrane regions (helical) follow at residues 51-82 (YFLM…KWLY) and 91-111 (LRYL…SGFS). An intramembrane region (helical) is located at residues 116-127 (PFSGGSGIPELK). Ser-121 lines the chloride pocket. 2 consecutive transmembrane segments (helical) span residues 141-160 (IKNF…TGST) and 161-180 (LFLG…AAYL). The helical intramembrane region spans 203–224 (AGAAVGVATVFAAPFSGVLFCI). The helical transmembrane segment at 236–255 (YWRGFFAATCGAFMFRLLAV) threads the bilayer. Ca(2+)-binding residues include Glu-259, Glu-261, Asp-278, and Glu-281. 2 helical membrane passes run 282 to 310 (IFFF…LAFT) and 325 to 342 (PLYA…TYPP). Residues 349–360 (ASRLSMREHLDT) constitute an intramembrane region (helical). A glycan (N-linked (GlcNAc...) asparagine) is linked at Asn-364. Helical transmembrane passes span 400–420 (GTLA…TTIP) and 421–440 (MPAG…GRLL). Phe-426 is a chloride binding site. Residues 464–496 (GGYALAGAAAFSGAVTHSISTALLAFELTGQIV) constitute an intramembrane region (helical). Residues 500-520 (PVLMAVLAANAIAQSCQPSFY) traverse the membrane as a helical segment. Residues 521–678 (DGTIMVKKLP…SWVERQHTGF (158 aa)) lie on the Cytoplasmic side of the membrane. CBS domains follow at residues 551–612 (MRRA…ARAS) and 620–678 (DILA…HTGF).

It belongs to the chloride channel (TC 2.A.49) family. CLCNKB subfamily. Homodimer. Interacts with BSND. In terms of processing, N-glycosylated. In terms of tissue distribution, expressed predominantly in the kidney.

Its subcellular location is the basolateral cell membrane. The enzyme catalyses chloride(in) = chloride(out). The catalysed reaction is iodide(out) = iodide(in). It catalyses the reaction nitrate(in) = nitrate(out). It carries out the reaction bromide(in) = bromide(out). In terms of biological role, anion-selective channel permeable to small monovalent anions with ion selectivity for chloride &gt; bromide &gt; nitrate &gt; iodide. Forms a homodimeric channel where each subunit has its own ion conduction pathway. May conduct double-barreled currents controlled by two types of gates, two fast gates that control each subunit independently and a slow common gate that opens and shuts off both subunits simultaneously. Assembles with the regulatory subunit BSND/Barttin for sorting at the basolateral plasma membrane domain and functional switch to the ion conducting state. CLCNKB:BSND channels display mostly a linear current-voltage relationship controlled by common gate. Mediates chloride conductance along nephron segments, namely the thick ascending limb of Henle's loop, convoluted tubule and the collecting duct, contributing to the maintenance of systemic acid-base and electrolyte homeostasis. Conducts chloride currents in the stria vascularis of the inner ear to establish the endocochlear potential necessary for normal hearing. This Oryctolagus cuniculus (Rabbit) protein is Chloride channel protein ClC-Kb (CLCNKB).